Reading from the N-terminus, the 62-residue chain is MAKTVVRKNESFDDALRRFKRTVSRSGTLQEYRKREFYEKPSVKKKLKSEAARKRKAKKKRF.

Residues 43-52 are compositionally biased toward basic and acidic residues; that stretch reads VKKKLKSEAA. The tract at residues 43 to 62 is disordered; that stretch reads VKKKLKSEAARKRKAKKKRF. Residues 53 to 62 show a composition bias toward basic residues; sequence RKRKAKKKRF.

This sequence belongs to the bacterial ribosomal protein bS21 family.

This chain is Small ribosomal subunit protein bS21, found in Levilactobacillus brevis (strain ATCC 367 / BCRC 12310 / CIP 105137 / JCM 1170 / LMG 11437 / NCIMB 947 / NCTC 947) (Lactobacillus brevis).